The following is a 79-amino-acid chain: ATP synthase subunit beta (79 aa).

The protein belongs to the ATPase alpha/beta chains family. As to quaternary structure, F-type ATPases have 2 components, CF(1) - the catalytic core - and CF(0) - the membrane proton channel. CF(1) has five subunits: alpha(3), beta(3), gamma(1), delta(1), epsilon(1). CF(0) has three main subunits: a(1), b(2) and c(9-12). The alpha and beta chains form an alternating ring which encloses part of the gamma chain. CF(1) is attached to CF(0) by a central stalk formed by the gamma and epsilon chains, while a peripheral stalk is formed by the delta and b chains.

It is found in the cell membrane. It catalyses the reaction ATP + H2O + 4 H(+)(in) = ADP + phosphate + 5 H(+)(out). Functionally, produces ATP from ADP in the presence of a proton gradient across the membrane. The catalytic sites are hosted primarily by the beta subunits. The protein is ATP synthase subunit beta (atpD) of Streptococcus downei (Streptococcus sobrinus).